The sequence spans 125 residues: Diol dehydratase-reactivating factor small subunit (125 aa).

E31 provides a ligand contact to Mg(2+).

The protein belongs to the DdrB/PduH family. In terms of assembly, component of the DDR complex, a heterotetramer of DdrA(2)/DdrB(2). The DDR complex interacts with the diol dehydratase complex in the presence of ADP but not ATP. Mg(2+) serves as cofactor.

The enzyme catalyses ATP + H2O = ADP + phosphate + H(+). In terms of biological role, small subunit of the diol dehydratase-reactivating factor (DDR), which reactivates suicidally inhibited adenosylcobalamin-dependent diol dehydratase (DD, pddA, pddB, pddC). DDR acts as a chaperone, reactivates inactivated DD holoenzyme in the presence of ATP, Mg(2+) and free adenosylcobalamin (AdoCbl), by mediating the exchange of the tightly bound damaged cofactor AdoCbl for a free intact one. Reactivation takes place in two steps: ADP-dependent cobalamin release, and ATP-dependent dissociation of the DD apoenzyme-DDR complex. DDR has weak ATPase activity which is required for DD reactivation. Activates glycerol-inactivated, O2-inactivated holoenzyme and inactivated enzyme-cyanocobalamin complex. Also reactivates glycerol-inactivated hologlycerol dehydratase, a DD isozyme. The sequence is that of Diol dehydratase-reactivating factor small subunit from Klebsiella michiganensis (strain ATCC 8724 / DSM 4798 / JCM 20051 / NBRC 3318 / NRRL B-199 / KCTC 1686 / BUCSAV 143 / CCM 1901).